The following is a 433-amino-acid chain: ATP-dependent protease ATPase subunit HslU (433 aa).

ATP is bound by residues valine 18, 60-65 (GVGKTE), aspartate 246, glutamate 311, and arginine 383.

Belongs to the ClpX chaperone family. HslU subfamily. As to quaternary structure, a double ring-shaped homohexamer of HslV is capped on each side by a ring-shaped HslU homohexamer. The assembly of the HslU/HslV complex is dependent on binding of ATP.

It is found in the cytoplasm. Its function is as follows. ATPase subunit of a proteasome-like degradation complex; this subunit has chaperone activity. The binding of ATP and its subsequent hydrolysis by HslU are essential for unfolding of protein substrates subsequently hydrolyzed by HslV. HslU recognizes the N-terminal part of its protein substrates and unfolds these before they are guided to HslV for hydrolysis. In Rhodopseudomonas palustris (strain BisB5), this protein is ATP-dependent protease ATPase subunit HslU.